A 326-amino-acid polypeptide reads, in one-letter code: Probable cell division protein WhiA (326 aa).

Residues 275–308 (SLDELGRLADPPMTKDAIAGRIRRLLAMADKRAS) constitute a DNA-binding region (H-T-H motif).

The protein belongs to the WhiA family.

Its function is as follows. Involved in cell division and chromosome segregation. The sequence is that of Probable cell division protein WhiA from Renibacterium salmoninarum (strain ATCC 33209 / DSM 20767 / JCM 11484 / NBRC 15589 / NCIMB 2235).